The primary structure comprises 361 residues: Putative F-box protein At3g19560 (361 aa).

Residues 3 to 49 (MTMMSDISQDLLEEILSRVPITSLRAVKSTCKRWKDLLNDPSFSKKY) form the F-box domain.

The polypeptide is Putative F-box protein At3g19560 (Arabidopsis thaliana (Mouse-ear cress)).